Consider the following 443-residue polypeptide: Xaa-Pro dipeptidase (443 aa).

Asp-246, Asp-257, His-339, Glu-384, and Glu-423 together coordinate Mn(2+).

This sequence belongs to the peptidase M24B family. Bacterial-type prolidase subfamily. Mn(2+) serves as cofactor.

It carries out the reaction Xaa-L-Pro dipeptide + H2O = an L-alpha-amino acid + L-proline. In terms of biological role, splits dipeptides with a prolyl residue in the C-terminal position. This Escherichia coli O157:H7 protein is Xaa-Pro dipeptidase.